Here is a 98-residue protein sequence, read N- to C-terminus: Large ribosomal subunit protein bL25 (98 aa).

The segment at 1–23 (MANFVLNAQARAEDKQGKGASRR) is disordered.

Belongs to the bacterial ribosomal protein bL25 family. In terms of assembly, part of the 50S ribosomal subunit; part of the 5S rRNA/L5/L18/L25 subcomplex. Contacts the 5S rRNA. Binds to the 5S rRNA independently of L5 and L18.

In terms of biological role, this is one of the proteins that binds to the 5S RNA in the ribosome where it forms part of the central protuberance. This chain is Large ribosomal subunit protein bL25, found in Acinetobacter baumannii (strain AB307-0294).